The chain runs to 313 residues: GDP-D-glycero-alpha-D-manno-heptose dehydrogenase (313 aa).

NADH-binding positions include 13–14 (YI), 33–39 (DNLMFDQ), Phe37, 57–58 (DA), Leu77, and 144–148 (YGIDK). GDP is bound at residue Thr168. NADH is bound by residues Val169 and 175 to 177 (RMR). GDP is bound by residues 179 to 184 (DLLVND), 196 to 198 (VLF), Arg204, Lys242, and Arg270. Asn311 serves as a coordination point for NADH.

Homotetramer. The cofactor is NAD(+).

The enzyme catalyses GDP-D-glycero-alpha-D-manno-heptose + 2-oxoglutarate = GDP-D-glycero-4-keto-alpha-D-lyxo-heptose + (S)-2-hydroxyglutarate. It participates in capsule biogenesis; capsule polysaccharide biosynthesis. Its function is as follows. NAD-dependent dehydrogenase involved in the biosynthesis of heptose moieties with a hydroxyl group at C6 found on the capsular polysaccharide (CPS) of C.jejuni. Catalyzes the initial oxidation of C4 of the GDP-D-glycero-alpha-D-manno-heptose to form GDP-D-glycero-4-keto-alpha-D-lyxo-heptose in the presence of alpha-ketoglutarate required to recycle the NADH nucleotide. This Campylobacter jejuni subsp. jejuni serotype O:2 (strain ATCC 700819 / NCTC 11168) protein is GDP-D-glycero-alpha-D-manno-heptose dehydrogenase.